The primary structure comprises 100 residues: Small ribosomal subunit protein uS14c (100 aa).

Belongs to the universal ribosomal protein uS14 family. As to quaternary structure, part of the 30S ribosomal subunit.

It is found in the plastid. Its subcellular location is the chloroplast. Its function is as follows. Binds 16S rRNA, required for the assembly of 30S particles. The polypeptide is Small ribosomal subunit protein uS14c (Citrus sinensis (Sweet orange)).